Here is a 446-residue protein sequence, read N- to C-terminus: RUN domain-containing protein 3A (446 aa).

Residues 1-298 (MEASFVQTTM…LQLQLEEAAA (298 aa)) are interaction with RAP2A. One can recognise an RUN domain in the interval 52 to 189 (DDSSEEFVNF…IDFSFCLKGE (138 aa)). T215 carries the post-translational modification Phosphothreonine. A disordered region spans residues 216 to 239 (DEEERHSAESSTSEDNSPEHPYLP). Residue S232 is modified to Phosphoserine. A coiled-coil region spans residues 267–322 (YLEELVRLRESQLKDLEAENRRLQLQLEEAAAQNQREKRELEGVILELQEQLTGLI). Over residues 372-384 (PLSAEASLSSDSQ) the composition is skewed to polar residues. The segment at 372–404 (PLSAEASLSSDSQRLGEGTRDEEPWGPIGKDPT) is disordered. Residues S416 and S419 each carry the phosphoserine modification.

Belongs to the RUNDC3 family. Interacts with the GTP-bound form of RAP2A.

May act as an effector of RAP2A in neuronal cells. This is RUN domain-containing protein 3A (RUNDC3A) from Homo sapiens (Human).